A 314-amino-acid chain; its full sequence is 2,3-dihydroxyphenylpropionate/2,3-dihydroxicinnamic acid 1,2-dioxygenase (314 aa).

His115 functions as the Proton donor in the catalytic mechanism. Residue His179 is the Proton acceptor of the active site.

It belongs to the LigB/MhpB extradiol dioxygenase family. As to quaternary structure, homotetramer. The cofactor is Fe(2+).

It carries out the reaction 3-(2,3-dihydroxyphenyl)propanoate + O2 = (2Z,4E)-2-hydroxy-6-oxonona-2,4-dienedioate + H(+). It catalyses the reaction (2E)-3-(2,3-dihydroxyphenyl)prop-2-enoate + O2 = (2Z,4E,7E)-2-hydroxy-6-oxonona-2,4,7-trienedioate + H(+). It participates in aromatic compound metabolism; 3-phenylpropanoate degradation. In terms of biological role, catalyzes the non-heme iron(II)-dependent oxidative cleavage of 2,3-dihydroxyphenylpropionic acid and 2,3-dihydroxicinnamic acid into 2-hydroxy-6-ketononadienedioate and 2-hydroxy-6-ketononatrienedioate, respectively. The protein is 2,3-dihydroxyphenylpropionate/2,3-dihydroxicinnamic acid 1,2-dioxygenase of Klebsiella pneumoniae (strain 342).